The primary structure comprises 666 residues: MTSQKRFIFEVEAAKEATDGNPSVGPVYRSTFAQNGFPNPIDGIQSCWDIFRTAVEKYPNNRMLGRREISNGKAGKYVWKTYKEVYDIVIKLGNSLRSCGIKEGEKCGIYGINCCEWIISMEACNAHGLYCVPLYDTLGAGAVEFIISHAEVSIAFVEEKKIPELFKTCPNSTKYMKTVVSFGGVKPEQKEEAEKLGLVIHSWDEFLKLGEGKQYELPIKKPSDICTIMYTSGTTGDPKGVMISNESIVTITTGVMHFLGNVNASLSEKDVYISYLPLAHVFDRAIEECIIQVGGSIGFWRGDVKLLIEDLGELKPSIFCAVPRVLDRVYTGLQQKLSGGGFFKKKVFDVAFSYKFGNMKKGQSHVAASPFCDKLVFNKVKQGLGGNVRIILSGAAPLASHIESFLRVVACCNVLQGYGLTESCAGTFATFPDELDMLGTVGPPVPNVDIRLESVPEMNYDALGSTPRGEICIRGKTLFSGYYKREDLTKEVFIDGWLHTGDVGEWQPNGSMKIIDRKKNIFKLAQGEYVAVENLENVYSQVEVIESIWVYGNSFESFLVAIANPAQQTLERWAVENGVNGDFNSICQNAKAKAFILGELVKTAKENKLKGFEIIKDVHLEPVAFDMERDLLTPTYKKKRPQLLKYYQNVIHEMYKTTKESLASGQ.

228–239 (IMYTSGTTGDPK) is a binding site for ATP. Residues 495 to 519 (DGWLHTGDVGEWQPNGSMKIIDRKK) form a fatty acid-binding region.

This sequence belongs to the ATP-dependent AMP-binding enzyme family. Mg(2+) is required as a cofactor.

The enzyme catalyses a long-chain fatty acid + ATP + CoA = a long-chain fatty acyl-CoA + AMP + diphosphate. The protein operates within lipid metabolism; fatty acid metabolism. In terms of biological role, activation of long-chain fatty acids for both synthesis of cellular lipids, and degradation via beta-oxidation. Preferentially uses palmitate, palmitoleate, oleate and linoleate. The chain is Long chain acyl-CoA synthetase 5 (LACS5) from Arabidopsis thaliana (Mouse-ear cress).